A 940-amino-acid polypeptide reads, in one-letter code: Isoleucine--tRNA ligase (940 aa).

Positions 58-68 (PYANGAIHIGH) match the 'HIGH' region motif. An L-isoleucyl-5'-AMP-binding site is contributed by Glu564. Positions 605–609 (KMSKS) match the 'KMSKS' region motif. Lys608 is a binding site for ATP. Cys903, Cys906, Cys923, and Cys926 together coordinate Zn(2+).

Belongs to the class-I aminoacyl-tRNA synthetase family. IleS type 1 subfamily. As to quaternary structure, monomer. The cofactor is Zn(2+).

It localises to the cytoplasm. The enzyme catalyses tRNA(Ile) + L-isoleucine + ATP = L-isoleucyl-tRNA(Ile) + AMP + diphosphate. Catalyzes the attachment of isoleucine to tRNA(Ile). As IleRS can inadvertently accommodate and process structurally similar amino acids such as valine, to avoid such errors it has two additional distinct tRNA(Ile)-dependent editing activities. One activity is designated as 'pretransfer' editing and involves the hydrolysis of activated Val-AMP. The other activity is designated 'posttransfer' editing and involves deacylation of mischarged Val-tRNA(Ile). This is Isoleucine--tRNA ligase from Nitrosococcus oceani (strain ATCC 19707 / BCRC 17464 / JCM 30415 / NCIMB 11848 / C-107).